The primary structure comprises 172 residues: Putative phosphoesterase BCG9842_B4061 (172 aa).

The Proton donor role is filled by histidine 34. 2 short sequence motifs (HXTX) span residues 34 to 37 (HITL) and 115 to 118 (HLTI). Residue histidine 115 is the Proton acceptor of the active site.

The protein belongs to the 2H phosphoesterase superfamily. YjcG family.

This Bacillus cereus (strain G9842) protein is Putative phosphoesterase BCG9842_B4061.